We begin with the raw amino-acid sequence, 131 residues long: Small ribosomal subunit protein bS6 (131 aa).

Residues 94 to 131 (DAVTEESQLAKNADEKRARKATTRRPDSNDDNDNHSDD) form a disordered region. A compositionally biased stretch (basic and acidic residues) spans 117–131 (RRPDSNDDNDNHSDD).

It belongs to the bacterial ribosomal protein bS6 family.

Its function is as follows. Binds together with bS18 to 16S ribosomal RNA. The protein is Small ribosomal subunit protein bS6 of Psychrobacter cryohalolentis (strain ATCC BAA-1226 / DSM 17306 / VKM B-2378 / K5).